Consider the following 456-residue polypeptide: MSVLLFGVSHRSAPVSVLEQLSVDDSDQAKLIDQVLQSSLVTEAMVLSTCNRVEIYAVVEAFHGGLSVIGQVLSEHSGMSLQDLTKHAYVRYAEAAVEHLFSVAGGLDSAVIGEQQVLGQVRRAYASAEANHTVGRTLHELSQRALAVGKRVHSETGIDAAGASVVSVALDTAEKKVGSLAGRSAVLVGAGSMGALAAKQLMRAGVERIHVVNRTLPRAAKLAENVRSYGITAEAFPFDHLPPLLTDADIVVTCTGAVRPVVSLADVHRGLAHVREPKELVICDLGMPRDVDPAVAGLPGVFVVDMERILREPTARAAATDADAARTIVAAEVAKYLAGQRMAEVTPTVTALRQRAADVVEAELLRLDNRLPGLDAAHRDEVANTVRRVVDKLLHAPTVRVKQLAGAPGGDSYAEALRELFELDQHAVDAVAGTELGPLAGGDELGSLAIDLDMTE.

Substrate contacts are provided by residues 49–52 (TCNR), S109, 114–116 (EQQ), and Q120. The active-site Nucleophile is the C50. 189–194 (GAGSMG) is an NADP(+) binding site.

This sequence belongs to the glutamyl-tRNA reductase family. As to quaternary structure, homodimer.

It catalyses the reaction (S)-4-amino-5-oxopentanoate + tRNA(Glu) + NADP(+) = L-glutamyl-tRNA(Glu) + NADPH + H(+). It functions in the pathway porphyrin-containing compound metabolism; protoporphyrin-IX biosynthesis; 5-aminolevulinate from L-glutamyl-tRNA(Glu): step 1/2. In terms of biological role, catalyzes the NADPH-dependent reduction of glutamyl-tRNA(Glu) to glutamate 1-semialdehyde (GSA). The polypeptide is Glutamyl-tRNA reductase (Mycolicibacterium vanbaalenii (strain DSM 7251 / JCM 13017 / BCRC 16820 / KCTC 9966 / NRRL B-24157 / PYR-1) (Mycobacterium vanbaalenii)).